The sequence spans 277 residues: 2-dehydro-3-deoxyphosphooctonate aldolase (277 aa).

This sequence belongs to the KdsA family.

The protein resides in the cytoplasm. It carries out the reaction D-arabinose 5-phosphate + phosphoenolpyruvate + H2O = 3-deoxy-alpha-D-manno-2-octulosonate-8-phosphate + phosphate. Its pathway is carbohydrate biosynthesis; 3-deoxy-D-manno-octulosonate biosynthesis; 3-deoxy-D-manno-octulosonate from D-ribulose 5-phosphate: step 2/3. It functions in the pathway bacterial outer membrane biogenesis; lipopolysaccharide biosynthesis. This chain is 2-dehydro-3-deoxyphosphooctonate aldolase, found in Alkalilimnicola ehrlichii (strain ATCC BAA-1101 / DSM 17681 / MLHE-1).